The following is a 445-amino-acid chain: GTPase Der (445 aa).

2 consecutive EngA-type G domains span residues 3–167 (PVIA…YAGQ) and 180–353 (IKIA…AAAM). GTP-binding positions include 9–16 (GRPNVGKS), 56–60 (DTGGF), 119–122 (NKAE), 186–193 (GRPNVGKS), 233–237 (DTAGL), and 298–301 (NKWD). The KH-like domain occupies 354–438 (SKLPTPKLTR…PLRIEFRSSN (85 aa)).

Belongs to the TRAFAC class TrmE-Era-EngA-EngB-Septin-like GTPase superfamily. EngA (Der) GTPase family. In terms of assembly, associates with the 50S ribosomal subunit.

Its function is as follows. GTPase that plays an essential role in the late steps of ribosome biogenesis. This chain is GTPase Der, found in Burkholderia cenocepacia (strain ATCC BAA-245 / DSM 16553 / LMG 16656 / NCTC 13227 / J2315 / CF5610) (Burkholderia cepacia (strain J2315)).